Reading from the N-terminus, the 289-residue chain is 2-hydroxy-6-oxononadienedioate/2-hydroxy-6-oxononatrienedioate hydrolase (289 aa).

Residues 39–275 (TVVMLHGSGP…RCGHWAQWEH (237 aa)) form the AB hydrolase-1 domain. The active-site Proton acceptor is His-269.

It belongs to the AB hydrolase superfamily. MhpC family. Homodimer.

It catalyses the reaction (2Z,4E)-2-hydroxy-6-oxonona-2,4-dienedioate + H2O = (2Z)-2-hydroxypenta-2,4-dienoate + succinate + H(+). The catalysed reaction is (2Z,4E,7E)-2-hydroxy-6-oxonona-2,4,7-trienedioate + H2O = (2Z)-2-hydroxypenta-2,4-dienoate + fumarate + H(+). It participates in aromatic compound metabolism; 3-phenylpropanoate degradation. Catalyzes the cleavage of the C5-C6 bond of 2-hydroxy-6-oxononadienedioate and 2-hydroxy-6-oxononatrienedioate, a dienol ring fission product of the bacterial meta-cleavage pathway for degradation of phenylpropionic acid. The sequence is that of 2-hydroxy-6-oxononadienedioate/2-hydroxy-6-oxononatrienedioate hydrolase from Paraburkholderia xenovorans (strain LB400).